Consider the following 26-residue polypeptide: Maculatin-3.1 (26 aa).

Ala-26 bears the Alanine amide mark.

Expressed by the skin dorsal glands.

Its subcellular location is the secreted. Shows antibacterial activity against S.uberis. The chain is Maculatin-3.1 from Ranoidea genimaculata (Brown-spotted tree frog).